The chain runs to 182 residues: Large ribosomal subunit protein bL17m (182 aa).

It belongs to the bacterial ribosomal protein bL17 family.

The protein resides in the mitochondrion. This Dictyostelium discoideum (Social amoeba) protein is Large ribosomal subunit protein bL17m (mrpl17).